The primary structure comprises 43 residues: U5-hexatoxin-Mr1a (43 aa).

Cystine bridges form between Cys1/Cys16, Cys8/Cys21, Cys15/Cys36, and Cys17/Cys43.

This sequence belongs to the neurotoxin 35 family. Post-translationally, contains 4 disulfide bonds. As to expression, expressed by the venom gland.

The protein localises to the secreted. This toxin blocks the neuromuscular transmission, and also acts on muscle. It exerts an effect of first exciting and then inhibiting the contraction of muscle. This toxin is active only against mammals. The chain is U5-hexatoxin-Mr1a from Macrothele raveni (Funnel-web spider).